The sequence spans 257 residues: Cytochrome b561 domain-containing protein At2g30890 (257 aa).

The N-terminal stretch at 1-21 is a signal peptide; the sequence is MEIHHQLLVSLLFLLLPLCSS. The Cytochrome b561 domain maps to 22–219; the sequence is QENTRSLAID…LFQDKWSYIQ (198 aa). 5 consecutive transmembrane segments (helical) span residues 55 to 75, 91 to 111, 125 to 145, 157 to 177, and 191 to 211; these read VHGF…IISI, LFFL…IGAV, HQQL…LGFL, WFVG…INIY, and ANLW…VYLF. The heme b site is built by H56, H95, H125, and H161. A disordered region spans residues 235-257; sequence NISTAETGHGYEVEESKPELEKC. Residues 243-257 are compositionally biased toward basic and acidic residues; sequence HGYEVEESKPELEKC.

The cofactor is heme b.

It is found in the membrane. The protein is Cytochrome b561 domain-containing protein At2g30890 of Arabidopsis thaliana (Mouse-ear cress).